The following is a 398-amino-acid chain: Phosphoglycerate kinase (398 aa).

Residues 21–23 (DFN), R36, 59–62 (HLGR), R119, and R157 contribute to the substrate site. ATP is bound by residues K208, G296, E327, and 354–357 (GGDS).

The protein belongs to the phosphoglycerate kinase family. As to quaternary structure, monomer.

It localises to the cytoplasm. The enzyme catalyses (2R)-3-phosphoglycerate + ATP = (2R)-3-phospho-glyceroyl phosphate + ADP. It participates in carbohydrate degradation; glycolysis; pyruvate from D-glyceraldehyde 3-phosphate: step 2/5. In Lactococcus lactis subsp. cremoris (strain MG1363), this protein is Phosphoglycerate kinase.